A 107-amino-acid polypeptide reads, in one-letter code: Translation initiation factor IF-1, chloroplastic (107 aa).

Residues 8 to 83 (REKKNPREAK…SKGRIIYRLP (76 aa)) enclose the S1-like domain. Residues 81–107 (RLPHKDSKRTEDSKDTEDLKDTKDSKD) are disordered. The span at 83–107 (PHKDSKRTEDSKDTEDLKDTKDSKD) shows a compositional bias: basic and acidic residues.

Belongs to the IF-1 family. Component of the 30S ribosomal translation pre-initiation complex which assembles on the 30S ribosome in the order IF-2 and IF-3, IF-1 and N-formylmethionyl-tRNA(fMet); mRNA recruitment can occur at any time during PIC assembly.

It localises to the plastid. It is found in the chloroplast. Functionally, one of the essential components for the initiation of protein synthesis. Stabilizes the binding of IF-2 and IF-3 on the 30S subunit to which N-formylmethionyl-tRNA(fMet) subsequently binds. Helps modulate mRNA selection, yielding the 30S pre-initiation complex (PIC). Upon addition of the 50S ribosomal subunit IF-1, IF-2 and IF-3 are released leaving the mature 70S translation initiation complex. In Saccharum hybrid (Sugarcane), this protein is Translation initiation factor IF-1, chloroplastic.